The sequence spans 428 residues: tRNA(Ile)-lysidine synthase (428 aa).

Residue 28–33 (SGGVDS) participates in ATP binding.

Belongs to the tRNA(Ile)-lysidine synthase family.

The protein resides in the cytoplasm. It catalyses the reaction cytidine(34) in tRNA(Ile2) + L-lysine + ATP = lysidine(34) in tRNA(Ile2) + AMP + diphosphate + H(+). Functionally, ligates lysine onto the cytidine present at position 34 of the AUA codon-specific tRNA(Ile) that contains the anticodon CAU, in an ATP-dependent manner. Cytidine is converted to lysidine, thus changing the amino acid specificity of the tRNA from methionine to isoleucine. The sequence is that of tRNA(Ile)-lysidine synthase from Streptococcus pyogenes serotype M18 (strain MGAS8232).